The following is a 96-amino-acid chain: Protein RnfH (96 aa).

It belongs to the UPF0125 (RnfH) family.

In Escherichia coli O81 (strain ED1a), this protein is Protein RnfH.